Consider the following 142-residue polypeptide: Protein E6 (142 aa).

2 zinc fingers span residues 30–66 (CVFC…CTPC) and 103–139 (CFDC…CRNC).

Belongs to the papillomaviridae E6 protein family. In terms of assembly, forms homodimers. Interacts with ubiquitin-protein ligase UBE3A/E6-AP; this interaction stimulates UBE3A ubiquitin activity. Interacts with host BAK1.

The protein localises to the host cytoplasm. It localises to the host nucleus. Functionally, plays a major role in the induction and maintenance of cellular transformation. E6 associates with host UBE3A/E6-AP ubiquitin-protein ligase and modulates its activity. Protects host keratinocytes from apoptosis by mediating the degradation of host BAK1. May also inhibit host immune response. The sequence is that of Protein E6 from Homo sapiens (Human).